The chain runs to 237 residues: Early nodulin-like protein 1 (237 aa).

The first 28 residues, 1-28 (MEASRRWPYAAWFMAVLGLVAVFSSSEA), serve as a signal peptide directing secretion. Residues 29–134 (YVFYAGGRDG…GQKLYIIVMA (106 aa)) form the Phytocyanin domain. A glycan (N-linked (GlcNAc...) asparagine) is linked at Asn59. Residues Cys85 and Cys122 are joined by a disulfide bond. The disordered stretch occupies residues 139-215 (KPSEAPEPAG…SLGAPPPTSG (77 aa)). Composition is skewed to low complexity over residues 140 to 152 (PSEA…AAGP) and 201 to 215 (MSRS…PTSG). Ser206 carries the GPI-anchor amidated serine lipid modification. Positions 207-237 (LGAPPPTSGAAGLAGVVASVVVGVLGALLMF) are cleaved as a propeptide — removed in mature form.

The protein belongs to the early nodulin-like (ENODL) family. As to expression, expressed ubiquitously. Accumulates particularly in reproductive tissues, especially in maturing seeds.

The protein resides in the vacuole. The protein localises to the aleurone grain membrane. Functionally, may act as a carbohydrate transporter. This is Early nodulin-like protein 1 from Oryza sativa subsp. japonica (Rice).